A 1034-amino-acid chain; its full sequence is Glycine dehydrogenase (decarboxylating), mitochondrial (1034 aa).

The N-terminal 63 residues, M1–T63, are a transit peptide targeting the mitochondrion. K770 carries the post-translational modification N6-(pyridoxal phosphate)lysine.

It belongs to the GcvP family. In terms of assembly, homodimer. The glycine cleavage system is composed of four proteins: P, T, L and H. The cofactor is pyridoxal 5'-phosphate.

It localises to the mitochondrion. It catalyses the reaction N(6)-[(R)-lipoyl]-L-lysyl-[glycine-cleavage complex H protein] + glycine + H(+) = N(6)-[(R)-S(8)-aminomethyldihydrolipoyl]-L-lysyl-[glycine-cleavage complex H protein] + CO2. Functionally, the glycine cleavage system catalyzes the degradation of glycine. The P protein binds the alpha-amino group of glycine through its pyridoxal phosphate cofactor; CO(2) is released and the remaining methylamine moiety is then transferred to the lipoamide cofactor of the H protein. The chain is Glycine dehydrogenase (decarboxylating), mitochondrial (GDCSPA) from Flaveria trinervia (Clustered yellowtops).